Here is a 247-residue protein sequence, read N- to C-terminus: 1-(5-phosphoribosyl)-5-[(5-phosphoribosylamino)methylideneamino] imidazole-4-carboxamide isomerase (247 aa).

Residue Asp8 is the Proton acceptor of the active site. The active-site Proton donor is the Asp130.

The protein belongs to the HisA/HisF family.

Its subcellular location is the cytoplasm. The enzyme catalyses 1-(5-phospho-beta-D-ribosyl)-5-[(5-phospho-beta-D-ribosylamino)methylideneamino]imidazole-4-carboxamide = 5-[(5-phospho-1-deoxy-D-ribulos-1-ylimino)methylamino]-1-(5-phospho-beta-D-ribosyl)imidazole-4-carboxamide. Its pathway is amino-acid biosynthesis; L-histidine biosynthesis; L-histidine from 5-phospho-alpha-D-ribose 1-diphosphate: step 4/9. This Leptospira biflexa serovar Patoc (strain Patoc 1 / Ames) protein is 1-(5-phosphoribosyl)-5-[(5-phosphoribosylamino)methylideneamino] imidazole-4-carboxamide isomerase.